Here is a 473-residue protein sequence, read N- to C-terminus: Photosystem II CP43 reaction center protein (473 aa).

Positions 1–14 (MKILYSLRRYFHVE) are excised as a propeptide. Thr-15 carries the post-translational modification N-acetylthreonine. At Thr-15 the chain carries Phosphothreonine. A run of 5 helical transmembrane segments spans residues 69–93 (LFEVAHFVPEKPMYEQGLILLPHLA), 134–155 (LIGPETLEESFPFFGYVWKDKN), 178–200 (KAIWFGGLYDTWAPGGGDVRKIT), 255–275 (KPFAWARRAFVWSGEAYLSYS), and 291–312 (WFNNTAYPSEFYGPTGPEASQA). Residue Glu-367 coordinates [CaMn4O5] cluster. Residues 447–471 (RARAAAAGFEKGIDRDSEPVLYMEP) traverse the membrane as a helical segment.

It belongs to the PsbB/PsbC family. PsbC subfamily. In terms of assembly, PSII is composed of 1 copy each of membrane proteins PsbA, PsbB, PsbC, PsbD, PsbE, PsbF, PsbH, PsbI, PsbJ, PsbK, PsbL, PsbM, PsbT, PsbX, PsbY, PsbZ, Psb30/Ycf12, at least 3 peripheral proteins of the oxygen-evolving complex and a large number of cofactors. It forms dimeric complexes. The cofactor is Binds multiple chlorophylls and provides some of the ligands for the Ca-4Mn-5O cluster of the oxygen-evolving complex. It may also provide a ligand for a Cl- that is required for oxygen evolution. PSII binds additional chlorophylls, carotenoids and specific lipids..

Its subcellular location is the plastid. The protein resides in the chloroplast thylakoid membrane. In terms of biological role, one of the components of the core complex of photosystem II (PSII). It binds chlorophyll and helps catalyze the primary light-induced photochemical processes of PSII. PSII is a light-driven water:plastoquinone oxidoreductase, using light energy to abstract electrons from H(2)O, generating O(2) and a proton gradient subsequently used for ATP formation. This is Photosystem II CP43 reaction center protein from Chara vulgaris (Common stonewort).